The chain runs to 182 residues: Tropomyosin-like protein (182 aa).

Positions 1 to 68 (FDRYNQILDE…ELEQRRTEQQ (68 aa)) form a coiled coil. Positions 32–66 (DEETKKIKQEEAEMKKKIEGEASRKKLELEQRRTE) are enriched in basic and acidic residues. Disordered regions lie at residues 32–81 (DEET…GSTD) and 140–160 (DQPA…DAGL). A compositionally biased stretch (low complexity) spans 140 to 153 (DQPAQAGPEPAAPA).

The protein localises to the cytoplasm. It localises to the cytoskeleton. This Pichia angusta (Yeast) protein is Tropomyosin-like protein.